We begin with the raw amino-acid sequence, 192 residues long: 3-hydroxyanthranilate 3,4-dioxygenase (192 aa).

R50 serves as a coordination point for O2. Residues H54, E60, and H102 each contribute to the Fe cation site. E60 contacts substrate. 2 residues coordinate substrate: R106 and E116. Positions 131, 134, 168, and 171 each coordinate a divalent metal cation.

Belongs to the 3-HAO family. Fe(2+) serves as cofactor.

Its subcellular location is the cytoplasm. The enzyme catalyses 3-hydroxyanthranilate + O2 = (2Z,4Z)-2-amino-3-carboxymuconate 6-semialdehyde. It functions in the pathway cofactor biosynthesis; NAD(+) biosynthesis; quinolinate from L-kynurenine: step 3/3. Its function is as follows. Catalyzes the oxidative ring opening of 3-hydroxyanthranilate to 2-amino-3-carboxymuconate semialdehyde, which spontaneously cyclizes to quinolinate. This is 3-hydroxyanthranilate 3,4-dioxygenase from Coccidioides immitis (strain RS) (Valley fever fungus).